Reading from the N-terminus, the 345-residue chain is Polyprenyl transferase dpmpC (345 aa).

8 helical membrane passes run 24 to 44, 60 to 80, 101 to 121, 183 to 203, 220 to 240, 261 to 281, 286 to 306, and 319 to 339; these read PVFA…ARLA, GLCF…NDWV, VTTF…WYLL, LYVY…VIGW, CLPL…AYSY, HLHL…LLFL, SFWL…EQLI, and LHKS…VELL.

Belongs to the UbiA prenyltransferase family. Mg(2+) is required as a cofactor.

Its subcellular location is the membrane. Its pathway is secondary metabolite biosynthesis; terpenoid biosynthesis. In terms of biological role, polyprenyl transferase; part of the gene cluster that mediates the biosynthesis of diterpenoid pyrones. The first step of the pathway is the synthesis of the alpha-pyrone moiety by the polyketide synthase dpmpA via condensation of one acetyl-CoA starter unit with 3 malonyl-CoA units and 2 methylations. The alpha-pyrone is then combined with geranylgeranyl pyrophosphate (GGPP) formed by the GGPP synthase dpmpD through the action of the prenyltransferase dpmpC to yield a linear alpha-pyrone diterpenoid. Subsequent steps in the diterpenoid pyrone biosynthetic pathway involve the decalin core formation, which is initiated by the epoxidation of the C10-C11 olefin by the FAD-dependent oxidoreductase dpmpE, and is followed by a cyclization cascade catalyzed by the terpene cyclase dpmpB. The short chain dehydrogenase/reductase dpmpG then oxidizes the 8S hydroxy group to a ketone and the short chain dehydrogenase/reductase dpmpH reduces the ketone to the 8R hydroxy group to yield higginsianin B. Higginsianin B is further methylated by the methyltransferase dpmpI to produce the intermediate named FDDP B. The cytochrome P450 monooxygenase dpmpJ then oxidizes the C-26 methyl to primary alcohol, producing the final diterpenoid pyrone with a C-26 primary alcohol on the gamma-pyrone moiety named FDDP C. The protein is Polyprenyl transferase dpmpC of Macrophomina phaseolina (strain MS6) (Charcoal rot fungus).